The sequence spans 376 residues: Methylthioribose-1-phosphate isomerase (376 aa).

The Proton donor role is filled by Asp256.

Belongs to the eIF-2B alpha/beta/delta subunits family. MtnA subfamily.

Its subcellular location is the cytoplasm. It localises to the nucleus. The catalysed reaction is 5-(methylsulfanyl)-alpha-D-ribose 1-phosphate = 5-(methylsulfanyl)-D-ribulose 1-phosphate. It functions in the pathway amino-acid biosynthesis; L-methionine biosynthesis via salvage pathway; L-methionine from S-methyl-5-thio-alpha-D-ribose 1-phosphate: step 1/6. Its function is as follows. Catalyzes the interconversion of methylthioribose-1-phosphate (MTR-1-P) into methylthioribulose-1-phosphate (MTRu-1-P). The protein is Methylthioribose-1-phosphate isomerase of Vitis vinifera (Grape).